Consider the following 309-residue polypeptide: Probable lipid kinase YegS-like (309 aa).

The 134-residue stretch at 1-134 (MAPSHWRLIL…VDLLRIDAEH (134 aa)) folds into the DAGKc domain. Residues Thr-39, 65-71 (GDGTLSE), and Thr-96 contribute to the ATP site. 3 residues coordinate Mg(2+): Val-219, Asp-222, and Leu-224. The Proton acceptor role is filled by Glu-280.

Belongs to the diacylglycerol/lipid kinase family. YegS lipid kinase subfamily. It depends on Mg(2+) as a cofactor. Requires Ca(2+) as cofactor.

Its subcellular location is the cytoplasm. Its function is as follows. Probably phosphorylates lipids; the in vivo substrate is unknown. This Xanthomonas oryzae pv. oryzae (strain MAFF 311018) protein is Probable lipid kinase YegS-like.